Reading from the N-terminus, the 401-residue chain is 8-amino-7-oxononanoate synthase (401 aa).

Arginine 24 contributes to the substrate binding site. Residue 111-112 (GF) coordinates pyridoxal 5'-phosphate. Histidine 137 serves as a coordination point for substrate. Pyridoxal 5'-phosphate contacts are provided by serine 183, histidine 211, and threonine 240. Position 243 is an N6-(pyridoxal phosphate)lysine (lysine 243). Residue threonine 357 participates in substrate binding.

This sequence belongs to the class-II pyridoxal-phosphate-dependent aminotransferase family. BioF subfamily. Homodimer. The cofactor is pyridoxal 5'-phosphate.

It carries out the reaction 6-carboxyhexanoyl-[ACP] + L-alanine + H(+) = (8S)-8-amino-7-oxononanoate + holo-[ACP] + CO2. It participates in cofactor biosynthesis; biotin biosynthesis. Catalyzes the decarboxylative condensation of pimeloyl-[acyl-carrier protein] and L-alanine to produce 8-amino-7-oxononanoate (AON), [acyl-carrier protein], and carbon dioxide. This Xanthomonas campestris pv. campestris (strain B100) protein is 8-amino-7-oxononanoate synthase.